The primary structure comprises 359 residues: DNA polymerase IV (359 aa).

Residues 4–184 (IVHVDMDAFY…LPVNRIPGVG (181 aa)) enclose the UmuC domain. Residues D8 and D102 each contribute to the Mg(2+) site. Residue E103 is part of the active site.

It belongs to the DNA polymerase type-Y family. Monomer. Mg(2+) is required as a cofactor.

It localises to the cytoplasm. It carries out the reaction DNA(n) + a 2'-deoxyribonucleoside 5'-triphosphate = DNA(n+1) + diphosphate. Poorly processive, error-prone DNA polymerase involved in untargeted mutagenesis. Copies undamaged DNA at stalled replication forks, which arise in vivo from mismatched or misaligned primer ends. These misaligned primers can be extended by PolIV. Exhibits no 3'-5' exonuclease (proofreading) activity. May be involved in translesional synthesis, in conjunction with the beta clamp from PolIII. The polypeptide is DNA polymerase IV (Xanthomonas campestris pv. campestris (strain 8004)).